The following is a 105-amino-acid chain: uncharacterized protein (105 aa).

This sequence belongs to the EspC family.

Its function is as follows. May be involved in assembly of the ESX-1 / type VII specialized secretion system (T7SS), which exports several proteins including EsxA and EsxB. Involved in DNA conjugation, in at least recipient strain. This is an uncharacterized protein from Mycolicibacterium smegmatis (strain MKD8) (Mycobacterium smegmatis).